The sequence spans 543 residues: CTP synthase (543 aa).

The amidoligase domain stretch occupies residues 1 to 265; sequence MARYIFITGG…DDEVLAAFAI (265 aa). Serine 13 is a CTP binding site. Serine 13 lines the UTP pocket. ATP is bound at residue 14 to 19; sequence SLGKGL. Position 54 (tyrosine 54) interacts with L-glutamine. Aspartate 71 serves as a coordination point for ATP. The Mg(2+) site is built by aspartate 71 and glutamate 139. CTP-binding positions include 146-148, 186-191, and lysine 222; these read DIE and KTKPTQ. UTP-binding positions include 186–191 and lysine 222; that span reads KTKPTQ. ATP is bound at residue 238–240; sequence RDA. The region spanning 291-542 is the Glutamine amidotransferase type-1 domain; it reads TIAIVGKYTG…VQAALVQSRL (252 aa). Glycine 353 contacts L-glutamine. Residue cysteine 380 is the Nucleophile; for glutamine hydrolysis of the active site. L-glutamine-binding positions include 381 to 384, glutamate 404, and arginine 470; that span reads FGMQ. Active-site residues include histidine 515 and glutamate 517.

It belongs to the CTP synthase family. In terms of assembly, homotetramer.

It carries out the reaction UTP + L-glutamine + ATP + H2O = CTP + L-glutamate + ADP + phosphate + 2 H(+). The catalysed reaction is L-glutamine + H2O = L-glutamate + NH4(+). It catalyses the reaction UTP + NH4(+) + ATP = CTP + ADP + phosphate + 2 H(+). It functions in the pathway pyrimidine metabolism; CTP biosynthesis via de novo pathway; CTP from UDP: step 2/2. Allosterically activated by GTP, when glutamine is the substrate; GTP has no effect on the reaction when ammonia is the substrate. The allosteric effector GTP functions by stabilizing the protein conformation that binds the tetrahedral intermediate(s) formed during glutamine hydrolysis. Inhibited by the product CTP, via allosteric rather than competitive inhibition. Catalyzes the ATP-dependent amination of UTP to CTP with either L-glutamine or ammonia as the source of nitrogen. Regulates intracellular CTP levels through interactions with the four ribonucleotide triphosphates. The sequence is that of CTP synthase from Rhodopseudomonas palustris (strain ATCC BAA-98 / CGA009).